We begin with the raw amino-acid sequence, 664 residues long: E3 ubiquitin-protein ligase RNF139 (664 aa).

N-acetylalanine is present on Ala2. 12 consecutive transmembrane segments (helical) span residues 51–71 (IVLQIFLRLFGVFASSIVLIL), 85–105 (AFLLAATSVLVNYYASLHIDF), 125–145 (SLWMALIVLQLTFGIGYVTLL), 154–174 (LIILDLLVPVIGLITELPLHI), 178–198 (LLFTSSLILTLNTVFVLAVKL), 293–313 (GMSAVISSVAHYLGLGILAFI), 323–343 (LGFVAPVLFFILALQTGLSGL), 356–376 (MCLLLTAVLHFIHGMTDPVLM), 390–410 (FPVLFVSACLFILPVLLSYVL), 420–440 (LFAVTAFCVELCLKVIVSLTV), 469–489 (SIIEFIFGVVMFGNGAYTMMF), and 495–512 (IRAFMMCLHAYFNIYLQA). The RING-type; atypical zinc finger occupies 547-586 (CAICYHEFTTSARITPCNHYFHALCLRKWLYIQDTCPMCH). Residues 601-664 (VSNNNGFIPP…AAEEFNDDTD (64 aa)) form a disordered region. Positions 616 to 628 (EAVREAAAESDRE) are enriched in basic and acidic residues. Acidic residues predominate over residues 629 to 639 (LNEDDSTDCDD). Ser634 carries the phosphoserine modification. Residues Thr635 and Thr663 each carry the phosphothreonine modification.

As to quaternary structure, interacts with MHC class I and HM13. Interacts with VHL. Component of SCAP-SREBP complex composed of SREBF2, SCAP and RNF139; the complex hampers the interaction between SCAP and SEC24B, thereby reducing SREBF2 proteolytic processing. Interacts with SREBF2 (via C-terminal domain). Interacts with SCAP; the interaction inhibits the interaction of SCAP with SEC24B and hampering the ER to Golgi transport of the SCAP-SREBP complex. Interacts with SEC24B. Interacts with INSIG1 and INSIG2. Interacts with EIF3F and EIF3H; the interaction leads to protein translation inhibitions in a ubiquitination-dependent manner. Interacts with XBP1 isoform 1; the interaction induces ubiquitination and degradation of XBP1 isoform 1. Interacts with AUP1, AMFR and UBE2G2; interaction with AUP1 facilitates interaction of RNF139 with ubiquitin-conjugating enzyme UBE2G2 and ubiquitin ligase AMFR/gp78, leading to sterol-induced ubiquitination of HMGCR and its subsequent proteasomal degradation. In terms of processing, autoubiquitinated. Ubiquitination is induced by sterol and leads to ist degradation via the ubiquitin-proteasome pathway. In terms of tissue distribution, highly expressed in testis, placenta and adrenal gland. Moderate expression in heart, brain, liver, skeletal muscle and pancreas, and low expression in lung and kidney.

It is found in the endoplasmic reticulum membrane. The enzyme catalyses S-ubiquitinyl-[E2 ubiquitin-conjugating enzyme]-L-cysteine + [acceptor protein]-L-lysine = [E2 ubiquitin-conjugating enzyme]-L-cysteine + N(6)-ubiquitinyl-[acceptor protein]-L-lysine.. It functions in the pathway protein modification; protein ubiquitination. In terms of biological role, E3-ubiquitin ligase; acts as a negative regulator of cell proliferation through mechanisms involving G2/M arrest and cell death. Required for MHC class I ubiquitination in cells expressing the cytomegalovirus protein US2 before dislocation from the endoplasmic reticulum (ER). Affects SREBP processing by hindering the SREBP-SCAP complex translocation from the ER to the Golgi, thereby reducing SREBF2 target gene expression. Involved in the sterol-accelerated degradation of HMGCR. This is achieved through binding of RNF139 to INSIG1 and/or INSIG2 at the ER membrane. In addition, interaction of RNF139 with AUP1 facilitates interaction of RNF139 with ubiquitin-conjugating enzyme UBE2G2 and ubiquitin ligase AMFR, leading to ubiquitination of HMGCR. The ubiquitinated HMGCR is then released from the ER into the cytosol for subsequent destruction. Required for INSIG1 ubiquitination. May be required for EIF3 complex ubiquitination. The polypeptide is E3 ubiquitin-protein ligase RNF139 (Homo sapiens (Human)).